Reading from the N-terminus, the 504-residue chain is ATP synthase subunit alpha, chloroplastic (504 aa).

Glycine 170 to threonine 177 lines the ATP pocket.

This sequence belongs to the ATPase alpha/beta chains family. F-type ATPases have 2 components, CF(1) - the catalytic core - and CF(0) - the membrane proton channel. CF(1) has five subunits: alpha(3), beta(3), gamma(1), delta(1), epsilon(1). CF(0) has four main subunits: a, b, b' and c.

It is found in the plastid. The protein localises to the chloroplast thylakoid membrane. It catalyses the reaction ATP + H2O + 4 H(+)(in) = ADP + phosphate + 5 H(+)(out). Functionally, produces ATP from ADP in the presence of a proton gradient across the membrane. The alpha chain is a regulatory subunit. The chain is ATP synthase subunit alpha, chloroplastic from Jasminum nudiflorum (Winter jasmine).